Reading from the N-terminus, the 160-residue chain is 6,7-dimethyl-8-ribityllumazine synthase (160 aa).

5-amino-6-(D-ribitylamino)uracil contacts are provided by residues W27, 59-61, and 81-83; these read AIE and VVI. A (2S)-2-hydroxy-3-oxobutyl phosphate-binding site is contributed by 86–87; the sequence is ET. Catalysis depends on H89, which acts as the Proton donor. N114 provides a ligand contact to 5-amino-6-(D-ribitylamino)uracil. R128 lines the (2S)-2-hydroxy-3-oxobutyl phosphate pocket.

Belongs to the DMRL synthase family. As to quaternary structure, homopentamer.

It carries out the reaction (2S)-2-hydroxy-3-oxobutyl phosphate + 5-amino-6-(D-ribitylamino)uracil = 6,7-dimethyl-8-(1-D-ribityl)lumazine + phosphate + 2 H2O + H(+). It functions in the pathway cofactor biosynthesis; riboflavin biosynthesis; riboflavin from 2-hydroxy-3-oxobutyl phosphate and 5-amino-6-(D-ribitylamino)uracil: step 1/2. Functionally, catalyzes the formation of 6,7-dimethyl-8-ribityllumazine by condensation of 5-amino-6-(D-ribitylamino)uracil with 3,4-dihydroxy-2-butanone 4-phosphate. This is the penultimate step in the biosynthesis of riboflavin. The protein is 6,7-dimethyl-8-ribityllumazine synthase of Mycobacterium ulcerans (strain Agy99).